The following is a 318-amino-acid chain: Cyclic AMP receptor-like protein F (318 aa).

The Extracellular segment spans residues Met-1 to Asp-3. Residues Ile-4–Ile-24 traverse the membrane as a helical segment. Over Thr-25–Asn-38 the chain is Cytoplasmic. A helical membrane pass occupies residues Phe-39 to Ile-59. The Extracellular portion of the chain corresponds to Phe-60–Ser-83. Cysteines 81 and 177 form a disulfide. Residues Leu-84–Val-104 traverse the membrane as a helical segment. The Cytoplasmic portion of the chain corresponds to Lys-105–Thr-145. Residues Leu-146–Ile-166 traverse the membrane as a helical segment. Over Ser-167–Arg-187 the chain is Extracellular. The chain crosses the membrane as a helical span at residues Phe-188–Ile-208. Residues Leu-209–Glu-234 are Cytoplasmic-facing. The chain crosses the membrane as a helical span at residues Phe-235–Val-255. Over Leu-256 to Thr-267 the chain is Extracellular. A helical membrane pass occupies residues Phe-268 to Trp-288. At Ala-289–Lys-318 the chain is on the cytoplasmic side.

Belongs to the G-protein coupled receptor 5 family.

It is found in the membrane. Receptor for cAMP. The chain is Cyclic AMP receptor-like protein F (crlF) from Dictyostelium discoideum (Social amoeba).